The chain runs to 411 residues: Phosphoglycerate kinase (411 aa).

Substrate is bound by residues 19-21 (DLN), arginine 34, 57-60 (HQSR), arginine 114, and arginine 154. ATP contacts are provided by residues glutamate 332 and 358–361 (GGHS).

The protein belongs to the phosphoglycerate kinase family. As to quaternary structure, monomer.

The protein localises to the cytoplasm. It carries out the reaction (2R)-3-phosphoglycerate + ATP = (2R)-3-phospho-glyceroyl phosphate + ADP. Its pathway is carbohydrate degradation; glycolysis; pyruvate from D-glyceraldehyde 3-phosphate: step 2/5. The sequence is that of Phosphoglycerate kinase from Thermococcus kodakarensis (strain ATCC BAA-918 / JCM 12380 / KOD1) (Pyrococcus kodakaraensis (strain KOD1)).